We begin with the raw amino-acid sequence, 51 residues long: Insulin (51 aa).

Cystine bridges form between Cys-7/Cys-37, Cys-19/Cys-50, and Cys-36/Cys-41.

It belongs to the insulin family. In terms of assembly, heterodimer of a B chain and an A chain linked by two disulfide bonds.

Its subcellular location is the secreted. In terms of biological role, insulin decreases blood glucose concentration. It increases cell permeability to monosaccharides, amino acids and fatty acids. It accelerates glycolysis, the pentose phosphate cycle, and glycogen synthesis in liver. The chain is Insulin (INS) from Acomys cahirinus (Cairo spiny mouse).